The primary structure comprises 383 residues: Dual-specificity RNA methyltransferase RlmN (383 aa).

The active-site Proton acceptor is the Glu-95. The Radical SAM core domain maps to 101–349 (EETRGTLCVS…TTVRKTRGDD (249 aa)). An intrachain disulfide couples Cys-108 to Cys-354. The [4Fe-4S] cluster site is built by Cys-115, Cys-119, and Cys-122. Residues 180-181 (GE), Ser-212, 234-236 (SLH), and Asn-311 each bind S-adenosyl-L-methionine. Cys-354 functions as the S-methylcysteine intermediate in the catalytic mechanism.

Belongs to the radical SAM superfamily. RlmN family. It depends on [4Fe-4S] cluster as a cofactor.

The protein localises to the cytoplasm. It carries out the reaction adenosine(2503) in 23S rRNA + 2 reduced [2Fe-2S]-[ferredoxin] + 2 S-adenosyl-L-methionine = 2-methyladenosine(2503) in 23S rRNA + 5'-deoxyadenosine + L-methionine + 2 oxidized [2Fe-2S]-[ferredoxin] + S-adenosyl-L-homocysteine. The catalysed reaction is adenosine(37) in tRNA + 2 reduced [2Fe-2S]-[ferredoxin] + 2 S-adenosyl-L-methionine = 2-methyladenosine(37) in tRNA + 5'-deoxyadenosine + L-methionine + 2 oxidized [2Fe-2S]-[ferredoxin] + S-adenosyl-L-homocysteine. Functionally, specifically methylates position 2 of adenine 2503 in 23S rRNA and position 2 of adenine 37 in tRNAs. m2A2503 modification seems to play a crucial role in the proofreading step occurring at the peptidyl transferase center and thus would serve to optimize ribosomal fidelity. The chain is Dual-specificity RNA methyltransferase RlmN from Paraburkholderia xenovorans (strain LB400).